Here is a 266-residue protein sequence, read N- to C-terminus: Glutamate racemase (266 aa).

Substrate is bound by residues 9-10 and 41-42; these read DS and YG. C72 (proton donor/acceptor) is an active-site residue. 73-74 contributes to the substrate binding site; sequence NT. C184 (proton donor/acceptor) is an active-site residue. 185–186 is a substrate binding site; it reads TH.

Belongs to the aspartate/glutamate racemases family.

The catalysed reaction is L-glutamate = D-glutamate. It functions in the pathway cell wall biogenesis; peptidoglycan biosynthesis. Functionally, provides the (R)-glutamate required for cell wall biosynthesis. The polypeptide is Glutamate racemase (Staphylococcus aureus (strain bovine RF122 / ET3-1)).